A 118-amino-acid polypeptide reads, in one-letter code: Large ribosomal subunit protein bL19 (118 aa).

This sequence belongs to the bacterial ribosomal protein bL19 family.

This protein is located at the 30S-50S ribosomal subunit interface and may play a role in the structure and function of the aminoacyl-tRNA binding site. The protein is Large ribosomal subunit protein bL19 of Helicobacter hepaticus (strain ATCC 51449 / 3B1).